Reading from the N-terminus, the 193-residue chain is Probable nicotinate-nucleotide adenylyltransferase (193 aa).

Belongs to the NadD family.

It catalyses the reaction nicotinate beta-D-ribonucleotide + ATP + H(+) = deamido-NAD(+) + diphosphate. Its pathway is cofactor biosynthesis; NAD(+) biosynthesis; deamido-NAD(+) from nicotinate D-ribonucleotide: step 1/1. Functionally, catalyzes the reversible adenylation of nicotinate mononucleotide (NaMN) to nicotinic acid adenine dinucleotide (NaAD). The polypeptide is Probable nicotinate-nucleotide adenylyltransferase (Fusobacterium nucleatum subsp. nucleatum (strain ATCC 25586 / DSM 15643 / BCRC 10681 / CIP 101130 / JCM 8532 / KCTC 2640 / LMG 13131 / VPI 4355)).